A 325-amino-acid polypeptide reads, in one-letter code: GMP reductase (325 aa).

The active-site Thioimidate intermediate is the cysteine 173. Position 202–225 (202–225) interacts with NADP(+); the sequence is IIADGGIRSHGDIAKSIRFGATMV.

This sequence belongs to the IMPDH/GMPR family. GuaC type 2 subfamily.

It carries out the reaction IMP + NH4(+) + NADP(+) = GMP + NADPH + 2 H(+). In terms of biological role, catalyzes the irreversible NADPH-dependent deamination of GMP to IMP. It functions in the conversion of nucleobase, nucleoside and nucleotide derivatives of G to A nucleotides, and in maintaining the intracellular balance of A and G nucleotides. The polypeptide is GMP reductase (Paracidovorax citrulli (strain AAC00-1) (Acidovorax citrulli)).